Reading from the N-terminus, the 492-residue chain is Adenosylhomocysteinase-like 2 (492 aa).

The interval phenylalanine 43 to glycine 64 is disordered. The substrate site is built by aspartate 192 and glutamate 217. Serine 218–threonine 220 lines the NAD(+) pocket. Positions 247 and 251 each coordinate substrate. Residues glycine 283–glycine 288, glutamate 304, methionine 360–histidine 362, asparagine 407, lysine 486, lysine 486–tyrosine 490, and tyrosine 490 contribute to the NAD(+) site.

This sequence belongs to the adenosylhomocysteinase family. NAD(+) serves as cofactor.

Might play a role in the regulation of methionine metabolism. The chain is Adenosylhomocysteinase-like 2 from Drosophila melanogaster (Fruit fly).